A 300-amino-acid polypeptide reads, in one-letter code: Centromere protein O (300 aa).

Coiled coils occupy residues 18–42 (LAHL…QSVQ) and 83–109 (NQTV…QAYH). Serine 35 is modified (phosphoserine).

This sequence belongs to the CENP-O/MCM21 family. As to quaternary structure, component of the CENPA-CAD complex, composed of CENPI, CENPK, CENPL, CENPO, CENPP, CENPQ, CENPR and CENPS. The CENPA-CAD complex interacts with the CENPA-NAC complex, at least composed of CENPA, CENPC, CENPH, CENPM, CENPN, CENPT and CENPU.

Its subcellular location is the nucleus. It is found in the chromosome. The protein localises to the centromere. It localises to the kinetochore. Component of the CENPA-CAD (nucleosome distal) complex, a complex recruited to centromeres which is involved in assembly of kinetochore proteins, mitotic progression and chromosome segregation. May be involved in incorporation of newly synthesized CENPA into centromeres via its interaction with the CENPA-NAC complex. Modulates the kinetochore-bound levels of NDC80 complex. The polypeptide is Centromere protein O (CENPO) (Homo sapiens (Human)).